The sequence spans 90 residues: Chaplin-G (90 aa).

The signal sequence occupies residues 1-27; the sequence is MSRIAKAAGVALGTGAVVLSGTGMAMA. One can recognise a Chaplin domain in the interval 38–78; that stretch reads SPGVLSGNVVQVPVHVPVNLCGNTIDVIGLLNPAFGNACEN. Residues Cys-58 and Cys-76 are joined by a disulfide bond.

It belongs to the chaplin family. Short chaplin subfamily.

Its subcellular location is the cell surface. It is found in the secreted. The protein localises to the cell wall. One of 8 partially redundant surface-active proteins required for efficient formation of aerial mycelium; the short chaplins assemble into a hydrophobic, amyloidal fibrillar surface layer that envelopes and protects aerial hyphae and spores, presumably anchored to the long chaplins. Chaplins have an overlapping function with the surface-active SapB peptide; chaplins are essential on minimal medium while on rich medium both chaplins and SapB are required for efficient aerial hyphae formation. Chaplins are also involved in cell attachment to a hydrophobic surface. Forms amyloid fibrils in vitro probably composed of stacked beta-sheets, at low extracellular concentrations individually restores the ability to form aerial hyphae to a chaplin-deficient strain. A small chaplin extract (ChpD, ChpE, ChpF, ChpG and ChpH) self-assembles into 2 different amyloids; small fibrils at the air-water interface form an amphipathic membrane that resembles spore-surface structures involved in aerial hyphae formation, and hydrophilic fibrils in solution that resemble the fibers that attach cells to a hydrophobic surface. At the air-water interface the hydrophilic surface is in contact with water (probably equivalent to the peptidoglycan layer), while the hydrophobic face is exposed to the air, making the surface of the aerial hyphae hydrophobic. A small chaplin extract applied to a chaplin-deficient strain restores aerial hyphae formation. The small chaplin extract forms an amyloid-like structure similar to that seen on the surface of cells without rodlets (rdlA-rdlB deletions), and is highly surface active, reducing surface tension from 72 to 26 mJ/m(2), which probably allows escape of hyphae from an aqueous environment into air. ChpF and ChpG are sufficient to restore the rodlet layer and hydrophobicity to a strain deleted for the other 6 chaplin genes. The chain is Chaplin-G from Streptomyces coelicolor (strain ATCC BAA-471 / A3(2) / M145).